The primary structure comprises 518 residues: MPTVVVMDVSLSMTRPVSVEGSEEYQRKHLAVHGLTMLFEHMATNYKLEFTALVVFSSLWELMVPFTRDYNTLQEALSNMDDYDKTCLESALLGVCNIVQQEWGAAIPCQVVLVTDGCLGIGRGSLRHSLATHNQRSESNRFPLPFPFPSKLYVMCMANLEELQSTDSLDCLERLIDLNNGEGQIFTIDGPLCLKNVQSMFGKLIDLAYTPFHAVLKCGHLTSDVQVFPRPEPFIIDEEIDPIPKAINTDLEIVGFVDIADISSPPVLSRHLVLPIALNREGDEVGPGITDDTEDENSANQIAGKIPNFCVLLHGSLKVEGMVAVVQLGPEWYGMLYSQADSKKKSNLMMSLFEPGPEPLPWLGKMAQLGPISDAKENPYGDDDNKSPFPLQPKNKRSYAQNVTVWIKPSGLQTDVQKILRNARKLPEKTQTFYKELNRLRKAALAFGFLDLLKGVADMLERECTLLPDTAHPDAAFQLTHAAQQLKVASTGASEYTAYDHNIAPLQTDFPTTSTERM.

The 203-residue stretch at 2–204 folds into the VWFA domain; it reads PTVVVMDVSL…KNVQSMFGKL (203 aa). Mg(2+) contacts are provided by S10, S12, and T86. Residues 373-394 are disordered; sequence SDAKENPYGDDDNKSPFPLQPK. The span at 374–386 shows a compositional bias: basic and acidic residues; that stretch reads DAKENPYGDDDNK.

The protein belongs to the Integrator subunit 14 family. As to quaternary structure, component of the Integrator complex, composed of core subunits INTS1, INTS2, INTS3, INTS4, INTS5, INTS6, INTS7, INTS8, INTS9/RC74, INTS10, INTS11/CPSF3L, INTS12, INTS13, INTS14 and INTS15. The core complex associates with protein phosphatase 2A subunits PPP2CA and PPP2R1A, to form the Integrator-PP2A (INTAC) complex. INTS14 is part of the tail subcomplex, composed of INTS10, INTS13, INTS14 and INTS15.

Its subcellular location is the nucleus. Its function is as follows. Component of the integrator complex, a multiprotein complex that terminates RNA polymerase II (Pol II) transcription in the promoter-proximal region of genes. The integrator complex provides a quality checkpoint during transcription elongation by driving premature transcription termination of transcripts that are unfavorably configured for transcriptional elongation: the complex terminates transcription by (1) catalyzing dephosphorylation of the C-terminal domain (CTD) of Pol II subunit POLR2A/RPB1 and SUPT5H/SPT5, (2) degrading the exiting nascent RNA transcript via endonuclease activity and (3) promoting the release of Pol II from bound DNA. The integrator complex is also involved in terminating the synthesis of non-coding Pol II transcripts, such as enhancer RNAs (eRNAs), small nuclear RNAs (snRNAs), telomerase RNAs and long non-coding RNAs (lncRNAs). Within the integrator complex, INTS14 is part of the integrator tail module that acts as a platform for the recruitment of transcription factors at promoters. The protein is Integrator complex subunit 14 of Gallus gallus (Chicken).